The following is an 858-amino-acid chain: Adenylate cyclase, germination specific (858 aa).

The Cytoplasmic segment spans residues 1–18 (MKKTFVKILSKSYVEGYP). The helical; Signal-anchor for type II membrane protein transmembrane segment at 19–41 (VGFFIGLIILAIFGSMVCIFSFM) threads the bilayer. Residues 42-858 (HYSEEENSNI…DENVESKKNK (817 aa)) lie on the Extracellular side of the membrane. Residues 86–317 (VNPNFDRNDF…DCVLKLWIFT (232 aa)) enclose the CHASE domain. The region spanning 396 to 526 (CVFFLDIAGF…DTVNVASRME (131 aa)) is the Guanylate cyclase domain. The Mg(2+) site is built by aspartate 401, isoleucine 402, and aspartate 445. Disordered regions lie at residues 650 to 691 (YYYH…YHDT), 767 to 803 (SDNV…STNE), and 827 to 858 (ENCD…KKNK). Low complexity-rich tracts occupy residues 767 to 778 (SDNVNNYENNNN), 788 to 797 (GDNNNINDNN), and 834 to 849 (DNNN…NNND).

Belongs to the adenylyl cyclase class-4/guanylyl cyclase family.

The protein localises to the membrane. The catalysed reaction is ATP = 3',5'-cyclic AMP + diphosphate. Insensitive to guanine nucleotides. Functionally, has a large extracellular domain which may be involved in the recognition of an extracellular signal present during germination, leading to activation or inhibition of cAMP synthesis by the cytoplasmic domain. In Dictyostelium discoideum (Social amoeba), this protein is Adenylate cyclase, germination specific (acgA).